Here is a 368-residue protein sequence, read N- to C-terminus: Dihydroorotate dehydrogenase (quinone) (368 aa).

FMN is bound by residues Ala67–Lys71 and Thr91. Lys71 contacts substrate. Asn116–Phe120 contributes to the substrate binding site. Positions 146 and 179 each coordinate FMN. Residue Asn179 participates in substrate binding. Catalysis depends on Ser182, which acts as the Nucleophile. Position 184 (Asn184) interacts with substrate. Positions 222 and 250 each coordinate FMN. Asn251–Thr252 is a binding site for substrate. FMN-binding positions include Gly276, Gly305, and Tyr326–Ser327.

The protein belongs to the dihydroorotate dehydrogenase family. Type 2 subfamily. Monomer. The cofactor is FMN.

It is found in the cell membrane. The enzyme catalyses (S)-dihydroorotate + a quinone = orotate + a quinol. It functions in the pathway pyrimidine metabolism; UMP biosynthesis via de novo pathway; orotate from (S)-dihydroorotate (quinone route): step 1/1. Functionally, catalyzes the conversion of dihydroorotate to orotate with quinone as electron acceptor. This chain is Dihydroorotate dehydrogenase (quinone), found in Streptomyces coelicolor (strain ATCC BAA-471 / A3(2) / M145).